Consider the following 277-residue polypeptide: Phosphonates import ATP-binding protein PhnC 2 (277 aa).

Residues 3 to 251 form the ABC transporter domain; the sequence is ISLNGISVQH…LLQALYAQHL (249 aa). 40–47 contacts ATP; it reads GPSGAGKT.

It belongs to the ABC transporter superfamily. Phosphonates importer (TC 3.A.1.9.1) family. The complex is composed of two ATP-binding proteins (PhnC), two transmembrane proteins (PhnE) and a solute-binding protein (PhnD).

The protein localises to the cell inner membrane. The enzyme catalyses phosphonate(out) + ATP + H2O = phosphonate(in) + ADP + phosphate + H(+). In terms of biological role, part of the ABC transporter complex PhnCDE involved in phosphonates import. Responsible for energy coupling to the transport system. The sequence is that of Phosphonates import ATP-binding protein PhnC 2 from Albidiferax ferrireducens (strain ATCC BAA-621 / DSM 15236 / T118) (Rhodoferax ferrireducens).